Reading from the N-terminus, the 331-residue chain is Pantothenate kinase (331 aa).

Position 109-116 (109-116 (GSVAVGKS)) interacts with ATP.

The protein belongs to the prokaryotic pantothenate kinase family.

It localises to the cytoplasm. The catalysed reaction is (R)-pantothenate + ATP = (R)-4'-phosphopantothenate + ADP + H(+). Its pathway is cofactor biosynthesis; coenzyme A biosynthesis; CoA from (R)-pantothenate: step 1/5. The protein is Pantothenate kinase of Rhizobium rhizogenes (strain K84 / ATCC BAA-868) (Agrobacterium radiobacter).